Reading from the N-terminus, the 120-residue chain is Large ribosomal subunit protein uL18 (120 aa).

This sequence belongs to the universal ribosomal protein uL18 family. In terms of assembly, part of the 50S ribosomal subunit; part of the 5S rRNA/L5/L18/L25 subcomplex. Contacts the 5S and 23S rRNAs.

Functionally, this is one of the proteins that bind and probably mediate the attachment of the 5S RNA into the large ribosomal subunit, where it forms part of the central protuberance. This is Large ribosomal subunit protein uL18 from Rhodospirillum centenum (strain ATCC 51521 / SW).